A 63-amino-acid chain; its full sequence is Large ribosomal subunit protein uL29 (63 aa).

It belongs to the universal ribosomal protein uL29 family.

The chain is Large ribosomal subunit protein uL29 from Pseudomonas aeruginosa (strain UCBPP-PA14).